The following is a 312-amino-acid chain: Pyridoxal kinase (312 aa).

Position 1 is an N-acetylmethionine (methionine 1). Pyridoxal is bound by residues serine 12 and threonine 47. Residue threonine 47 participates in pyridoxal 5'-phosphate binding. Serine 59 carries the phosphoserine modification. Aspartate 113 contacts ATP. Na(+) is bound at residue aspartate 113. A Mg(2+)-binding site is contributed by aspartate 118. Na(+) is bound at residue threonine 148. An ATP-binding site is contributed by 150–153 (NQFE). The residue at position 164 (serine 164) is a Phosphoserine. A Na(+)-binding site is contributed by threonine 186. An ATP-binding site is contributed by 186–187 (TS). Residue serine 213 is modified to Phosphoserine. Residues 226 to 228 (VDA) and threonine 233 each bind ATP. 234–235 (GD) lines the pyridoxal 5'-phosphate pocket. Aspartate 235 functions as the Proton acceptor in the catalytic mechanism. At serine 285 the chain carries Phosphoserine.

Belongs to the pyridoxine kinase family. As to quaternary structure, homodimer. It depends on Mg(2+) as a cofactor. Zn(2+) is required as a cofactor. Co(2+) serves as cofactor. Requires Mn(2+) as cofactor. In terms of tissue distribution, ubiquitous. Highly expressed in testis. As to expression, in adult testis and spermatozoa.

The protein localises to the cytoplasm. The protein resides in the cytosol. The catalysed reaction is pyridoxal + ATP = pyridoxal 5'-phosphate + ADP + H(+). It catalyses the reaction pyridoxamine + ATP = pyridoxamine 5'-phosphate + ADP + H(+). It carries out the reaction pyridoxine + ATP = pyridoxine 5'-phosphate + ADP + H(+). It functions in the pathway cofactor metabolism; pyridoxal 5'-phosphate salvage; pyridoxal 5'-phosphate from pyridoxal: step 1/1. It participates in cofactor metabolism; pyridoxal 5'-phosphate salvage; pyridoxine 5'-phosphate from pyridoxine: step 1/1. The protein operates within cofactor metabolism; pyridoxal 5'-phosphate salvage; pyridoxamine 5'-phosphate from pyridoxamine: step 1/1. With respect to regulation, catalytic activity is inhibited competitively by 4-deoxypyridoxine, and is also inhibited by the benzodiazepine receptor ligands 1012S and ethyl-beta-carboline-3-carboxylate. Inhibited by ginkgotoxin, theophylline, lamotrigine, enprofylline, theobromine, and caffeine. Activity is increased in the presence of K(+)or Na(+). Catalyzes the phosphorylation of the dietary vitamin B6 vitamers pyridoxal (PL), pyridoxine (PN) and pyridoxamine (PM) to form pyridoxal 5'-phosphate (PLP), pyridoxine 5'-phosphate (PNP) and pyridoxamine 5'-phosphate (PMP), respectively. PLP is the active form of vitamin B6, and acts as a cofactor for over 140 different enzymatic reactions. This chain is Pyridoxal kinase, found in Homo sapiens (Human).